We begin with the raw amino-acid sequence, 156 residues long: Ribosomal RNA large subunit methyltransferase H (156 aa).

S-adenosyl-L-methionine-binding positions include L73, G104, and 123-128 (LSALTL).

It belongs to the RNA methyltransferase RlmH family. Homodimer.

The protein localises to the cytoplasm. It catalyses the reaction pseudouridine(1915) in 23S rRNA + S-adenosyl-L-methionine = N(3)-methylpseudouridine(1915) in 23S rRNA + S-adenosyl-L-homocysteine + H(+). Its function is as follows. Specifically methylates the pseudouridine at position 1915 (m3Psi1915) in 23S rRNA. The protein is Ribosomal RNA large subunit methyltransferase H of Shewanella putrefaciens (strain CN-32 / ATCC BAA-453).